We begin with the raw amino-acid sequence, 447 residues long: Phosphoglucosamine mutase (447 aa).

Catalysis depends on S103, which acts as the Phosphoserine intermediate. 4 residues coordinate Mg(2+): S103, D242, D244, and D246. S103 is modified (phosphoserine).

This sequence belongs to the phosphohexose mutase family. Mg(2+) serves as cofactor. In terms of processing, activated by phosphorylation.

It catalyses the reaction alpha-D-glucosamine 1-phosphate = D-glucosamine 6-phosphate. Its function is as follows. Catalyzes the conversion of glucosamine-6-phosphate to glucosamine-1-phosphate. This is Phosphoglucosamine mutase from Cereibacter sphaeroides (strain ATCC 17025 / ATH 2.4.3) (Rhodobacter sphaeroides).